The chain runs to 152 residues: ATP synthase epsilon chain 2 (152 aa).

The protein belongs to the ATPase epsilon chain family. F-type ATPases have 2 components, CF(1) - the catalytic core - and CF(0) - the membrane proton channel. CF(1) has five subunits: alpha(3), beta(3), gamma(1), delta(1), epsilon(1). CF(0) has three main subunits: a, b and c.

Its subcellular location is the cell inner membrane. Its function is as follows. Produces ATP from ADP in the presence of a proton gradient across the membrane. The protein is ATP synthase epsilon chain 2 of Burkholderia orbicola (strain AU 1054).